A 319-amino-acid chain; its full sequence is Cytochrome f (319 aa).

Positions 1-35 are cleaved as a signal peptide; sequence MFQQMQKISLKLLKTTFLFLFATFILVGLPSTSQA. Heme is bound by residues Tyr-36, Cys-56, Cys-59, and His-60. A helical transmembrane segment spans residues 285–305; it reads IQGLIAFFISVIIAQTFLVLK.

The protein belongs to the cytochrome f family. In terms of assembly, the 4 large subunits of the cytochrome b6-f complex are cytochrome b6, subunit IV (17 kDa polypeptide, petD), cytochrome f and the Rieske protein, while the 4 small subunits are PetG, PetL, PetM and PetN. The complex functions as a dimer. The cofactor is heme.

The protein resides in the plastid. Its subcellular location is the chloroplast thylakoid membrane. In terms of biological role, component of the cytochrome b6-f complex, which mediates electron transfer between photosystem II (PSII) and photosystem I (PSI), cyclic electron flow around PSI, and state transitions. The polypeptide is Cytochrome f (Chlorokybus atmophyticus (Soil alga)).